Reading from the N-terminus, the 865-residue chain is Adenylate cyclase (865 aa).

The tract at residues 1–540 (MYLYIETLKQ…DISSHFPIRL (540 aa)) is catalytic. Residues 546 to 865 (KALYSPCEIR…FNDYQAVHHH (320 aa)) form a regulatory region.

It belongs to the adenylyl cyclase class-1 family.

It localises to the cytoplasm. It catalyses the reaction ATP = 3',5'-cyclic AMP + diphosphate. This Proteus mirabilis protein is Adenylate cyclase (cya).